The primary structure comprises 406 residues: Bifunctional enzyme IspD/IspF (406 aa).

Positions 1–246 (MTQMHSTQPM…KLSAGLLPDV (246 aa)) are 2-C-methyl-D-erythritol 4-phosphate cytidylyltransferase. Positions 247-406 (RTGNGYDVHQ…ATVVYRGGRP (160 aa)) are 2-C-methyl-D-erythritol 2,4-cyclodiphosphate synthase. A divalent metal cation is bound by residues Asp253 and His255. Residues 253-255 (DVH) and 279-280 (HS) contribute to the 4-CDP-2-C-methyl-D-erythritol 2-phosphate site. His287 is an a divalent metal cation binding site. Residues 301–303 (DIG), 377–380 (TTNE), Phe384, and Arg387 contribute to the 4-CDP-2-C-methyl-D-erythritol 2-phosphate site.

The protein in the N-terminal section; belongs to the IspD/TarI cytidylyltransferase family. IspD subfamily. This sequence in the C-terminal section; belongs to the IspF family. It depends on a divalent metal cation as a cofactor.

It carries out the reaction 2-C-methyl-D-erythritol 4-phosphate + CTP + H(+) = 4-CDP-2-C-methyl-D-erythritol + diphosphate. The enzyme catalyses 4-CDP-2-C-methyl-D-erythritol 2-phosphate = 2-C-methyl-D-erythritol 2,4-cyclic diphosphate + CMP. It participates in isoprenoid biosynthesis; isopentenyl diphosphate biosynthesis via DXP pathway; isopentenyl diphosphate from 1-deoxy-D-xylulose 5-phosphate: step 2/6. The protein operates within isoprenoid biosynthesis; isopentenyl diphosphate biosynthesis via DXP pathway; isopentenyl diphosphate from 1-deoxy-D-xylulose 5-phosphate: step 4/6. Bifunctional enzyme that catalyzes the formation of 4-diphosphocytidyl-2-C-methyl-D-erythritol from CTP and 2-C-methyl-D-erythritol 4-phosphate (MEP) (IspD), and catalyzes the conversion of 4-diphosphocytidyl-2-C-methyl-D-erythritol 2-phosphate (CDP-ME2P) to 2-C-methyl-D-erythritol 2,4-cyclodiphosphate (ME-CPP) with a corresponding release of cytidine 5-monophosphate (CMP) (IspF). This is Bifunctional enzyme IspD/IspF from Rhizobium rhizogenes (strain K84 / ATCC BAA-868) (Agrobacterium radiobacter).